The sequence spans 285 residues: Release factor glutamine methyltransferase (285 aa).

S-adenosyl-L-methionine-binding positions include 119–123 (GTGSG), E142, W175, and N191. Residue 191-194 (NPPY) coordinates substrate.

It belongs to the protein N5-glutamine methyltransferase family. PrmC subfamily.

The catalysed reaction is L-glutaminyl-[peptide chain release factor] + S-adenosyl-L-methionine = N(5)-methyl-L-glutaminyl-[peptide chain release factor] + S-adenosyl-L-homocysteine + H(+). In terms of biological role, methylates the class 1 translation termination release factors RF1/PrfA and RF2/PrfB on the glutamine residue of the universally conserved GGQ motif. The protein is Release factor glutamine methyltransferase of Burkholderia pseudomallei (strain K96243).